The following is a 500-amino-acid chain: Glycerol kinase (500 aa).

Residue T12 coordinates ADP. 3 residues coordinate ATP: T12, T13, and S14. T12 serves as a coordination point for sn-glycerol 3-phosphate. An ADP-binding site is contributed by R16. Sn-glycerol 3-phosphate is bound by residues R82, E83, Y134, and D243. Glycerol contacts are provided by R82, E83, Y134, D243, and Q244. 2 residues coordinate ADP: T265 and G308. T265, G308, Q312, and G411 together coordinate ATP. G411 contacts ADP.

This sequence belongs to the FGGY kinase family.

The enzyme catalyses glycerol + ATP = sn-glycerol 3-phosphate + ADP + H(+). The protein operates within polyol metabolism; glycerol degradation via glycerol kinase pathway; sn-glycerol 3-phosphate from glycerol: step 1/1. With respect to regulation, inhibited by fructose 1,6-bisphosphate (FBP). Its function is as follows. Key enzyme in the regulation of glycerol uptake and metabolism. Catalyzes the phosphorylation of glycerol to yield sn-glycerol 3-phosphate. This is Glycerol kinase from Chelativorans sp. (strain BNC1).